Reading from the N-terminus, the 181-residue chain is Adenine phosphoribosyltransferase (181 aa).

The protein belongs to the purine/pyrimidine phosphoribosyltransferase family. Homodimer.

It is found in the cytoplasm. It catalyses the reaction AMP + diphosphate = 5-phospho-alpha-D-ribose 1-diphosphate + adenine. It functions in the pathway purine metabolism; AMP biosynthesis via salvage pathway; AMP from adenine: step 1/1. Functionally, catalyzes a salvage reaction resulting in the formation of AMP, that is energically less costly than de novo synthesis. This is Adenine phosphoribosyltransferase from Rhodopseudomonas palustris (strain HaA2).